Here is a 445-residue protein sequence, read N- to C-terminus: Serine--tRNA ligase (445 aa).

Position 229–231 (229–231) interacts with L-serine; the sequence is TAE. Residues 260–262 and Val276 contribute to the ATP site; that span reads RKE. An L-serine-binding site is contributed by Glu283. Position 347-350 (347-350) interacts with ATP; it reads EVSS. Ser383 provides a ligand contact to L-serine.

This sequence belongs to the class-II aminoacyl-tRNA synthetase family. Type-1 seryl-tRNA synthetase subfamily. Homodimer. The tRNA molecule binds across the dimer.

It localises to the cytoplasm. It catalyses the reaction tRNA(Ser) + L-serine + ATP = L-seryl-tRNA(Ser) + AMP + diphosphate + H(+). It carries out the reaction tRNA(Sec) + L-serine + ATP = L-seryl-tRNA(Sec) + AMP + diphosphate + H(+). It functions in the pathway aminoacyl-tRNA biosynthesis; selenocysteinyl-tRNA(Sec) biosynthesis; L-seryl-tRNA(Sec) from L-serine and tRNA(Sec): step 1/1. Functionally, catalyzes the attachment of serine to tRNA(Ser). Is also able to aminoacylate tRNA(Sec) with serine, to form the misacylated tRNA L-seryl-tRNA(Sec), which will be further converted into selenocysteinyl-tRNA(Sec). The protein is Serine--tRNA ligase of Thermomicrobium roseum (strain ATCC 27502 / DSM 5159 / P-2).